Consider the following 186-residue polypeptide: ATP synthase subunit delta (186 aa).

Belongs to the ATPase delta chain family. F-type ATPases have 2 components, F(1) - the catalytic core - and F(0) - the membrane proton channel. F(1) has five subunits: alpha(3), beta(3), gamma(1), delta(1), epsilon(1). F(0) has three main subunits: a(1), b(2) and c(10-14). The alpha and beta chains form an alternating ring which encloses part of the gamma chain. F(1) is attached to F(0) by a central stalk formed by the gamma and epsilon chains, while a peripheral stalk is formed by the delta and b chains.

It is found in the cell inner membrane. In terms of biological role, f(1)F(0) ATP synthase produces ATP from ADP in the presence of a proton or sodium gradient. F-type ATPases consist of two structural domains, F(1) containing the extramembraneous catalytic core and F(0) containing the membrane proton channel, linked together by a central stalk and a peripheral stalk. During catalysis, ATP synthesis in the catalytic domain of F(1) is coupled via a rotary mechanism of the central stalk subunits to proton translocation. This protein is part of the stalk that links CF(0) to CF(1). It either transmits conformational changes from CF(0) to CF(1) or is implicated in proton conduction. The sequence is that of ATP synthase subunit delta from Nitrobacter hamburgensis (strain DSM 10229 / NCIMB 13809 / X14).